The chain runs to 1040 residues: Multidrug resistance protein MdtB (1040 aa).

12 helical membrane passes run Leu25–Ala45, Leu347–Ala367, Ile369–Leu389, Leu396–Ile416, Ile440–Phe460, Phe472–Pro492, Trp537–Ile557, Leu863–Val883, Phe888–Ala908, Ile910–Ile930, Ile968–Val988, and Ile998–Ile1018.

This sequence belongs to the resistance-nodulation-cell division (RND) (TC 2.A.6) family. MdtB subfamily. As to quaternary structure, part of a tripartite efflux system composed of MdtA, MdtB and MdtC. MdtB forms a heteromultimer with MdtC.

It is found in the cell inner membrane. In Salmonella gallinarum (strain 287/91 / NCTC 13346), this protein is Multidrug resistance protein MdtB.